The chain runs to 241 residues: ATP synthase subunit a (241 aa).

A run of 5 helical transmembrane segments spans residues 30 to 50, 91 to 111, 128 to 148, 193 to 213, and 214 to 234; these read GQVF…VVVG, FIGT…LIPW, INTT…AGLS, LVVA…VMFL, and GLFT…YYIG.

This sequence belongs to the ATPase A chain family. As to quaternary structure, F-type ATPases have 2 components, CF(1) - the catalytic core - and CF(0) - the membrane proton channel. CF(1) has five subunits: alpha(3), beta(3), gamma(1), delta(1), epsilon(1). CF(0) has four main subunits: a, b, b' and c.

It is found in the cellular thylakoid membrane. Key component of the proton channel; it plays a direct role in the translocation of protons across the membrane. This is ATP synthase subunit a from Prochlorococcus marinus (strain SARG / CCMP1375 / SS120).